We begin with the raw amino-acid sequence, 32 residues long: ilv operon leader peptide (32 aa).

In Edwardsiella tarda, this protein is ilv operon leader peptide (ilvL).